Consider the following 199-residue polypeptide: Superoxide dismutase [Mn/Fe] (199 aa).

Histidine 27, histidine 81, aspartate 161, and histidine 165 together coordinate Fe(3+). Mn(2+) contacts are provided by histidine 27, histidine 81, aspartate 161, and histidine 165.

The protein belongs to the iron/manganese superoxide dismutase family. As to quaternary structure, homodimer. Requires Mn(2+) as cofactor. Fe(3+) serves as cofactor.

The catalysed reaction is 2 superoxide + 2 H(+) = H2O2 + O2. Functionally, destroys superoxide anion radicals which are normally produced within the cells and which are toxic to biological systems. Catalyzes the dismutation of superoxide anion radicals into O2 and H2O2 by successive reduction and oxidation of the transition metal ion at the active site. This chain is Superoxide dismutase [Mn/Fe] (sodA), found in Staphylococcus haemolyticus (strain JCSC1435).